Reading from the N-terminus, the 355-residue chain is CX3C chemokine receptor 1 (355 aa).

At 1–31 the chain is on the extracellular side; that stretch reads MDQFPESVTENFEYDDLAEACYIGDIVVFGT. A helical membrane pass occupies residues 32 to 59; the sequence is VFLSIFYSVIFAIGLVGNLLVVFALTNS. The Cytoplasmic segment spans residues 60 to 69; sequence KKPKSVTDIY. Residues 70 to 90 form a helical membrane-spanning segment; sequence LLNLALSDLLFVATLPFWTHY. Residues 91–103 are Extracellular-facing; that stretch reads LINEKGLHNAMCK. An intrachain disulfide couples cysteine 102 to cysteine 175. A helical transmembrane segment spans residues 104-125; that stretch reads FTTAFFFIGFFGSIFFITVISI. Residues 126 to 142 are Cytoplasmic-facing; the sequence is DRYLAIVLAANSMNNRT. Residues 143-167 form a helical membrane-spanning segment; sequence VQHGVTISLGVWAAAILVAAPQFMF. The Extracellular portion of the chain corresponds to 168 to 195; the sequence is TKQKENECLGDYPEVLQEIWPVLRNVET. A helical membrane pass occupies residues 196–215; it reads NFLGFLLPLLIMSYCYFRII. Over 216-231 the chain is Cytoplasmic; it reads QTLFSCKNHKKAKAIK. A helical membrane pass occupies residues 232 to 256; that stretch reads LILLVVIVFFLFWTPYNVMIFLETL. At 257-273 the chain is on the extracellular side; sequence KLYDFFPSCDMRKDLRL. Residues 274-297 form a helical membrane-spanning segment; the sequence is ALSVTETVAFSHCCLNPLIYAFAG. Over 298–355 the chain is Cytoplasmic; the sequence is EKFRRYLYHLYGKCLAVLCGRSVHVDFSSSESQRSRHGSVLSSNFTYHTSDGDALLLL. Threonine 346 carries the phosphothreonine modification.

It belongs to the G-protein coupled receptor 1 family. Found in a ternary complex with CX3CL1 and ITGAV:ITGB3 or ITGA4:ITGB1. As to quaternary structure, (Microbial infection) Interacts with human respiratory syncytial virus (HRSV) protein G; this interaction modulates host immune response. In terms of assembly, (Microbial infection) Interacts with HIV-1 envelope polyprotein gp160. In terms of processing, this protein is not N-glycosylated which is unusual for G-protein-coupled receptors. As to expression, expressed in lymphoid and neural tissues. Expressed in lymphocyte subsets, such as natural killer (NK) cells, gamma-delta T-cells and terminally differentiated CD8(+) T-cells. Expressed in smooth muscle cells in atherosclerotic plaques.

The protein localises to the cell membrane. Its function is as follows. Receptor for the C-X3-C chemokine fractalkine (CX3CL1) present on many early leukocyte cells; CX3CR1-CX3CL1 signaling exerts distinct functions in different tissue compartments, such as immune response, inflammation, cell adhesion and chemotaxis. CX3CR1-CX3CL1 signaling mediates cell migratory functions. Responsible for the recruitment of natural killer (NK) cells to inflamed tissues. Acts as a regulator of inflammation process leading to atherogenesis by mediating macrophage and monocyte recruitment to inflamed atherosclerotic plaques, promoting cell survival. Involved in airway inflammation by promoting interleukin 2-producing T helper (Th2) cell survival in inflamed lung. Involved in the migration of circulating monocytes to non-inflamed tissues, where they differentiate into macrophages and dendritic cells. Acts as a negative regulator of angiogenesis, probably by promoting macrophage chemotaxis. Plays a key role in brain microglia by regulating inflammatory response in the central nervous system (CNS) and regulating synapse maturation. Required to restrain the microglial inflammatory response in the CNS and the resulting parenchymal damage in response to pathological stimuli. Involved in brain development by participating in synaptic pruning, a natural process during which brain microglia eliminates extra synapses during postnatal development. Synaptic pruning by microglia is required to promote the maturation of circuit connectivity during brain development. Acts as an important regulator of the gut microbiota by controlling immunity to intestinal bacteria and fungi. Expressed in lamina propria dendritic cells in the small intestine, which form transepithelial dendrites capable of taking up bacteria in order to provide defense against pathogenic bacteria. Required to initiate innate and adaptive immune responses against dissemination of commensal fungi (mycobiota) component of the gut: expressed in mononuclear phagocytes (MNPs) and acts by promoting induction of antifungal IgG antibodies response to confer protection against disseminated C.albicans or C.auris infection. Also acts as a receptor for C-C motif chemokine CCL26, inducing cell chemotaxis. In terms of biological role, (Microbial infection) Acts as a coreceptor with CD4 for HIV-1 virus envelope protein. (Microbial infection) Acts as a coreceptor with CD4 for HIV-1 virus envelope protein. May have more potent HIV-1 coreceptothr activity than isoform 1. Functionally, (Microbial infection) Acts as a coreceptor with CD4 for HIV-1 virus envelope protein. May have more potent HIV-1 coreceptor activity than isoform 1. This is CX3C chemokine receptor 1 from Homo sapiens (Human).